Reading from the N-terminus, the 613-residue chain is MCCWPLLLLWGLLPGTAAGGSGRTYPHRTLLDSEGKYWLGWSQRGSQIAFRLQVRTAGYVGFGFSPTGAMASADIVVGGVAHGRPYLQDYFTNANRELKKDAQQDYHLEYAMENSTHTIIEFTRELHTCDINDKSITDSTVRVIWAYHHEDAGEAGPKYHDSNRGTKSLRLLNPEKTSVLSTALPYFDLVNQDVPIPNKDTTYWCQMFKIPVFQEKHHVIKVEPVIQRGHESLVHHILLYQCSNNFNDSVLESGHECYHPNMPDAFLTCETVIFAWAIGGEGFSYPPHVGLSLGTPLDPHYVLLEVHYDNPTYEEGLIDNSGLRLFYTMDIRKYDAGVIEAGLWVSLFHTIPPGMPEFQSEGHCTLECLEEALEAEKPSGIHVFAVLLHAHLAGRGIRLRHFRKGKEMKLLAYDDDFDFNFQEFQYLKEEQTILPGDNLITECRYNTKDRAEMTWGGLSTRSEMCLSYLLYYPRINLTRCASIPDIMEQLQFIGVKEIYRPVTTWPFIIKSPKQYKNLSFMDAMNKFKWTKKEGLSFNKLVLSLPVNVRCSKTDNAEWSIQGMTALPPDIERPYKAEPLVCGTSSSSSLHRDFSINLLVCLLLLSCTLSTKSL.

An N-terminal signal peptide occupies residues 1–19; it reads MCCWPLLLLWGLLPGTAAG. The Lumenal segment spans residues 20-592; the sequence is GSGRTYPHRT…TSSSSSLHRD (573 aa). The DOMON domain occupies 35–148; it reads GKYWLGWSQR…STVRVIWAYH (114 aa). N114 carries N-linked (GlcNAc...) asparagine glycosylation. Residue Y203 is part of the active site. 2 disulfides stabilise this stretch: C205–C257 and C242–C269. The Cu cation site is built by H235 and H236. N247 carries an N-linked (GlcNAc...) asparagine glycan. Residues H307, H389, H391, and M464 each contribute to the Cu cation site. Intrachain disulfides connect C364–C480, C368–C550, and C443–C465. H389 is an active-site residue. N-linked (GlcNAc...) asparagine glycosylation is found at N476 and N517. A helical transmembrane segment spans residues 593-613; the sequence is FSINLLVCLLLLSCTLSTKSL.

The protein belongs to the copper type II ascorbate-dependent monooxygenase family. The cofactor is Cu(2+). In terms of processing, N-glycosylated. As to expression, highly expressed in lung, kidney, brain and spinal cord.

It is found in the endoplasmic reticulum membrane. The sequence is that of DBH-like monooxygenase protein 1 (MOXD1) from Homo sapiens (Human).